The chain runs to 209 residues: Ras-related protein Rab-2-A (209 aa).

13 to 21 is a GTP binding site; that stretch reads GDTGVGKSC. The Effector region signature appears at 35–43; it reads HDLTIGVEF. GTP contacts are provided by residues 61 to 65, 119 to 122, and 149 to 151; these read DTAGQ, NKCD, and SAK. Residues Cys-207 and Cys-208 are each lipidated (S-geranylgeranyl cysteine).

This sequence belongs to the small GTPase superfamily. Rab family.

The protein resides in the endoplasmic reticulum membrane. It is found in the golgi apparatus membrane. Protein transport. Probably involved in vesicular traffic. This Zea mays (Maize) protein is Ras-related protein Rab-2-A (RAB2A).